We begin with the raw amino-acid sequence, 290 residues long: MPILQRASHHELRSAFRALLASERCYHTASVFDPMSARIAADLDFEVGILGGSVASLQVLGAPDFALITLSEFVEQAARIGRVARLPVIADADHGYGNALNVMRTVVELERAGVAALTIEDTLLPAQFGRKSTDLISIEEGVGKILAALEARVDPELSIIARTHAGVLEVDEVIRRTRAYEAAGADGICLVGVKDFAHLEQIAAGLKVPLMLVTYGNPELRDNQRLARLGVRIVVNGHAAYFAAIKATYDCLREQRGAQPCDLNATELTHKYTMPEDYILWAKEFMEVRE.

A substrate-binding site is contributed by serine 53. A Mg(2+)-binding site is contributed by aspartate 91. Residues arginine 162 and histidine 238 each contribute to the substrate site.

Belongs to the isocitrate lyase/PEP mutase superfamily. Oxaloacetate decarboxylase family. Homotetramer; dimer of dimers. The cofactor is Mg(2+).

It catalyses the reaction oxaloacetate + H(+) = pyruvate + CO2. In terms of biological role, catalyzes the decarboxylation of oxaloacetate into pyruvate. Seems to play a role in maintaining cellular concentrations of bicarbonate and pyruvate. The chain is Oxaloacetate decarboxylase from Ectopseudomonas mendocina (strain ymp) (Pseudomonas mendocina).